Consider the following 313-residue polypeptide: MKSMLVVTISIWLILAPTSTWAVNTIIYNVGSTTISKYATFLNDLRNEAKDPSLKCYGIPMLPNTNTNPKYVLVELQGSNKKTITLMLRRNNLYVMGYSDPFETNKCRYHIFNDISGTERQDVETTLCPNANSRVSKNINFDSRYPTLESKAGVKSRSQVQLGIQILDSNIGKISGVMSFTEKTEAEFLLVAIQMVSEAARFKYIENQVKTNFNRAFNPNPKVLNLQETWGKISTAIHDAKNGVLPKPLELVDASGAKWIVLRVDEIKPDVALLNYVGGSCQTTYNQNAMFPQLIMSTYYNYMVNLGDLFEGF.

Residues 1 to 22 (MKSMLVVTISIWLILAPTSTWA) form the signal peptide. 2 disulfides stabilise this stretch: cysteine 56-cysteine 281 and cysteine 107-cysteine 128. Tyrosine 94 is a catalytic residue. Substrate is bound at residue valine 95. Position 143 (serine 143) interacts with substrate. Residue tyrosine 145 is part of the active site. Serine 197 is a substrate binding site. Residues glutamate 198 and arginine 201 contribute to the active site. Arginine 201 contacts substrate. Positions 286-313 (NQNAMFPQLIMSTYYNYMVNLGDLFEGF) are excised as a propeptide.

It belongs to the ribosome-inactivating protein family. Type 1 RIP subfamily. Monomer. As to expression, expressed in spring leaves (at protein level). Expressed in roots (at protein level).

It catalyses the reaction Endohydrolysis of the N-glycosidic bond at one specific adenosine on the 28S rRNA.. Possesses antiviral potency. Inhibits viral infection of plants (tobacco mosaic virus). Inhibits protein synthesis. Releases both adenine and guanine from Escherichia coli rRNA in vitro. Activity on guanine is 20 times slower than that on adenine. This chain is Antiviral protein I (PAP1), found in Phytolacca americana (American pokeweed).